A 66-amino-acid polypeptide reads, in one-letter code: Small ribosomal subunit protein bS21B (66 aa).

The segment at 38-66 is disordered; sequence YVKPTQKRKIAKKAAISKAKKEARRSYSY.

It belongs to the bacterial ribosomal protein bS21 family.

The protein is Small ribosomal subunit protein bS21B of Francisella tularensis subsp. tularensis (strain SCHU S4 / Schu 4).